The following is a 257-amino-acid chain: Large ribosomal subunit protein uL2 (257 aa).

Residues 207 to 230 (VEHPFGGGNHQHIGKPSTIRRDAP) form a disordered region.

The protein belongs to the universal ribosomal protein uL2 family. As to quaternary structure, component of the large ribosomal subunit.

It localises to the cytoplasm. Its function is as follows. Component of the large ribosomal subunit. The ribosome is a large ribonucleoprotein complex responsible for the synthesis of proteins in the cell. The protein is Large ribosomal subunit protein uL2 (rpl8) of Danio rerio (Zebrafish).